A 683-amino-acid polypeptide reads, in one-letter code: Stromal interaction molecule 1 (683 aa).

Positions 1–22 (MDVCARLALWLLWGLLLHHGQS) are cleaved as a signal peptide. The Extracellular portion of the chain corresponds to 23-211 (LSQSHSEKAT…LLTRHNHLKD (189 aa)). EF-hand domains are found at residues 62 to 95 (SFDA…EDLN) and 100 to 124 (TVKH…AWKS). Ca(2+)-binding residues include Asp74, Asp76, Asn78, Asp80, and Glu85. N-linked (GlcNAc...) asparagine glycans are attached at residues Asn129 and Asn169. One can recognise an SAM domain in the interval 130 to 198 (WTVDEVVQWL…QLKALDTVLF (69 aa)). The helical transmembrane segment at 212–232 (FMLVVSIVIGVGGCWFAYIQN) threads the bilayer. At 233-683 (RYSKEHMKKM…LKIFKKPLKK (451 aa)) the chain is on the cytoplasmic side. Residues 246–440 (LEGLHRAEQS…IEILCGFQIV (195 aa)) adopt a coiled-coil conformation. Ser255 bears the Phosphoserine mark. Residues 342–440 (PEALQKWLQL…IEILCGFQIV (99 aa)) are SOAR/CAD. The segment at 473–481 (DDVDDMDEE) is contributes to fast Ca(2+)-dependent inactivation of CRAC channels. Low complexity predominate over residues 488–497 (MQSPSLQSSV). A disordered region spans residues 488–535 (MQSPSLQSSVRQRLTEPQHGLGSQRDLTHSDSESSLHMSDRQRLAPKP). Residue Thr502 is modified to Phosphothreonine. Ser510 carries the phosphoserine modification. A compositionally biased stretch (basic and acidic residues) spans 513–530 (DLTHSDSESSLHMSDRQR). Phosphothreonine is present on Thr515. A phosphoserine mark is found at Ser517, Ser519, Ser521, Ser522, Ser565, Ser573, Ser606, Ser616, and Ser626. Residues 597-683 (LSSPALPSGS…LKIFKKPLKK (87 aa)) are disordered. Residues 640 to 643 (TRIP) carry the Microtubule tip localization signal motif. The segment covering 653–664 (EEDNGSIGEETD) has biased composition (acidic residues). At Ser658 the chain carries Phosphoserine. Thr663 carries the post-translational modification Phosphothreonine. Ser666 carries the phosphoserine modification. Positions 668 to 683 (GRKKFPLKIFKKPLKK) are enriched in basic residues. Residues 670-683 (KKFPLKIFKKPLKK) are required for generation of inwardly rectifying CRAC currents.

Monomer in the presence of Ca(2+). It oligomerizes in absence of Ca(2+). Forms homooligomers and heterooligomers with STIM2. Interacts with pore-forming subunits of CRAC channels, ORAI1, ORAI2 and ORAI3; this interaction is potentiated upon Ca(2+) store depletion. Interacts (via the transmembrane region and the SOAR/CAD domain) with SPPL3; the interaction promotes the binding of STIM1 to ORAI1. Interacts with ORAI1. Interacts with MAPRE1; probably required for targeting to the growing microtubule plus ends. Interacts with CRACR2A/EFCAB4B; the interaction is direct and takes place in absence of Ca(2+). Forms a complex with CRACR2A/EFCAB4B and ORAI1 at low concentration of Ca(2+), the complex dissociates at elevated Ca(2+) concentrations. Interacts with SARAF, promoting a slow inactivation of STIM1-dependent SOCE activity, possibly by facilitating the deoligomerization of STIM1. Interacts with EFHB; the interaction takes place upon Ca(2+)-store depletion and inhibits the association with SARAF. Interacts with ASPH. Interacts with SLC35G1; intracellular Ca(2+)-dependent. May interact with ATP1A1, ATP2A2, ATP2B1, ATP2B4, KPNB1 and XPO1; through SLC35G1. Interacts with TMEM203. Interacts with STIMATE, promoting STIM1 conformational switch. Interacts with TMEM178A. Interacts with CASQ1 (via C-terminal end and preferentially with the monomeric form); this interaction increases in response to a depletion of intracellular calcium, decreases both STIM1 aggregation and clustering, interaction of STIM1 with ORAI1 and store-operated Ca(2+) entry (SOCE) activity. Post-translationally, glycosylation is required for cell surface expression. In terms of processing, phosphorylated predominantly on Ser residues.

The protein localises to the cell membrane. It is found in the endoplasmic reticulum membrane. Its subcellular location is the sarcoplasmic reticulum. It localises to the cytoplasm. The protein resides in the cytoskeleton. Functionally, acts as a Ca(2+) sensor that gates two major inward rectifying Ca(2+) channels at the plasma membrane: Ca(2+) release-activated Ca(2+) (CRAC) channels and arachidonate-regulated Ca(2+)-selective (ARC) channels. Plays a role in mediating store-operated Ca(2+) entry (SOCE), a Ca(2+) influx following depletion of intracellular Ca(2+) stores. Upon Ca(2+) depletion, translocates from the endoplasmic reticulum to the plasma membrane where it activates CRAC channel pore-forming subunits ORA1, ORA2 and ORAI3 to generate sustained and oscillatory Ca(2+) entry. Involved in enamel formation. This Bos taurus (Bovine) protein is Stromal interaction molecule 1 (STIM1).